A 385-amino-acid chain; its full sequence is dTDP-4-dehydro-2,3,6-trideoxy-D-glucose 4-aminotransferase (385 aa).

Lysine 182 is subject to N6-(pyridoxal phosphate)lysine.

The protein belongs to the DegT/DnrJ/EryC1 family. As to quaternary structure, homodimer. Pyridoxal 5'-phosphate serves as cofactor.

It catalyses the reaction dTDP-4-amino-2,3,4,6-tetradeoxy-alpha-D-erythro-hexopyranose + 2-oxoglutarate = dTDP-4-dehydro-2,3,6-trideoxy-alpha-D-hexopyranose + L-glutamate. Involved in the biosynthesis of forosamine ((4-dimethylamino)-2,3,4,6-tetradeoxy-alpha-D-threo-hexopyranose), a highly deoxygenated sugar component of several bioactive natural products such as the insecticidal spinosyns A and D. In the presence of pyridoxal 5'-phosphate (PLP) and alpha-ketoglutarate, catalyzes the C-4 transamination of dTDP-4-keto-2,3,6-trideoxy-alpha-D-glucose to yield dTDP-4-amino-2,3,4,6-tetradeoxy-alpha-D-glucose. It can also use pyruvate, but less efficiently than alpha-ketoglutarate. Also able to catalyze the C-4 transamination of dTDP-4-keto-2,6-dideoxy-alpha-D-glucose to yield dTDP-4-amino-2,4,6-trideoxy-D-glucose. This is dTDP-4-dehydro-2,3,6-trideoxy-D-glucose 4-aminotransferase from Saccharopolyspora spinosa.